We begin with the raw amino-acid sequence, 233 residues long: Inner kinetochore subunit fta4 (233 aa).

Residues Thr189 and Thr191 each carry the phosphothreonine modification.

Belongs to the NKP1 family. As to quaternary structure, component of the inner kinetochore constitutive centromere-associated network (CCAN) (also known as central kinetochore Sim4 complex in fission yeast), which is composed of at least cnl2, cnp3, cnp20, fta1, fta2, fta3, fta4, fta6, fta7, mal2, mhf1, mhf2, mis6, mis15, mis17, sim4 and wip1.

It is found in the nucleus. Its subcellular location is the chromosome. The protein localises to the centromere. The protein resides in the kinetochore. In terms of biological role, component of the kinetochore, a multiprotein complex that assembles on centromeric DNA and attaches chromosomes to spindle microtubules, mediating chromosome segregation and sister chromatid segregation during meiosis and mitosis. Component of the inner kinetochore constitutive centromere-associated network (CCAN), which serves as a structural platform for outer kinetochore assembly. Fta2, fta3 and fta4 associate with the central core (cnt) and inner repeat (inr) region of the centromere. This chain is Inner kinetochore subunit fta4 (fta4), found in Schizosaccharomyces pombe (strain 972 / ATCC 24843) (Fission yeast).